The sequence spans 846 residues: Aminopeptidase N (846 aa).

Residues glutamate 120 and 252–256 (GAMEN) each bind substrate. Histidine 288 contributes to the Zn(2+) binding site. The active-site Proton acceptor is the glutamate 289. Zn(2+)-binding residues include histidine 292 and glutamate 311.

The protein belongs to the peptidase M1 family. As to quaternary structure, monomer. The cofactor is Zn(2+).

It localises to the cytoplasm. It catalyses the reaction Release of an N-terminal amino acid, Xaa-|-Yaa- from a peptide, amide or arylamide. Xaa is preferably Ala, but may be most amino acids including Pro (slow action). When a terminal hydrophobic residue is followed by a prolyl residue, the two may be released as an intact Xaa-Pro dipeptide.. Aminopeptidase with broad substrate specificity to several peptides. It has more affinity for oligopeptides than for dipeptides. It plays an essential role in the metabolism, it may be involved in nitrogen supply or protein turnover. The protein is Aminopeptidase N (pepN) of Lactococcus lactis subsp. lactis (strain IL1403) (Streptococcus lactis).